Consider the following 203-residue polypeptide: Potassium channel Cha6605_3372 (203 aa).

Residues 1 to 7 (MVEAPEQ) lie on the Cytoplasmic side of the membrane. The chain crosses the membrane as a helical span at residues 8–31 (SETGRIEAFSDGVFAIAITLLVLE). Residues 12–18 (RIEAFSD) carry the RxxxFSD motif motif. The Extracellular portion of the chain corresponds to 32–52 (IKVPQHKIVETVGLVSSLLSL). Residues 37-42 (HKIVET) are short helix H1. Residues 44–50 (GLVSSLL) are short helix H2. Residues 53–78 (WPSYLAFLTSFASILVMWVNHHRIFS) traverse the membrane as a helical segment. Residues 79-84 (LVARTD) lie on the Cytoplasmic side of the membrane. Residues 85–110 (HAFFYWNGLLLMLVTFVPFPTALLAE) form a helical membrane-spanning segment. The Extracellular portion of the chain corresponds to 111–117 (YLIHPQA). A helical transmembrane segment spans residues 118-142 (RVAASVYAGIFLAIAIVFNRLWKHA). At 143–154 (ATADRLLAQKAD) the chain is on the cytoplasmic side. Residues 155–181 (RHEVDAITKQYRFGPGLYLVAFALSFI) traverse the membrane as a helical segment. The Extracellular portion of the chain corresponds to 182–183 (SV). Residues 184–199 (WLSVGVCFVLAIYFAL) form a helical membrane-spanning segment. Residues 200-203 (RSNA) lie on the Cytoplasmic side of the membrane.

Belongs to the TMEM175 family. In terms of assembly, homotetramer.

The protein resides in the membrane. It carries out the reaction K(+)(in) = K(+)(out). Potassium channel. The channel is permeable for K(+), Rb(+) and Cs(+), while it is unable to conduct Na(+). The sequence is that of Potassium channel Cha6605_3372 from Chamaesiphon minutus (strain ATCC 27169 / PCC 6605).